The following is a 365-amino-acid chain: NAC domain-containing protein 37 (365 aa).

The NAC domain maps to 9–158; it reads VPPGFRFHPT…GWVVCRAFKK (150 aa). A DNA-binding region spans residues 109-164; that stretch reads IGMRKTLVFYKGRAPNGKKSDWIMHEYRLESDENAPPQEEGWVVCRAFKKRATGQA.

This sequence belongs to the plant vascular related NAC-domain protein family. Interacts with NAC030/VND7. In terms of tissue distribution, expressed in root metaxylem pole and in shoot pre-procambium and procambium. Present in root developing xylems. Specifically expressed in vessels but not in interfascicular fibers in stems.

It is found in the nucleus. Its function is as follows. Transcription activator that binds to the secondary wall NAC binding element (SNBE), 5'-(T/A)NN(C/T)(T/C/G)TNNNNNNNA(A/C)GN(A/C/T)(A/T)-3', in the promoter of target genes. Involved in xylem formation by promoting the expression of secondary wall-associated transcription factors and of genes involved in secondary wall biosynthesis and programmed cell death, genes driven by the secondary wall NAC binding element (SNBE). Triggers thickening of secondary walls. The polypeptide is NAC domain-containing protein 37 (Arabidopsis thaliana (Mouse-ear cress)).